Here is a 197-residue protein sequence, read N- to C-terminus: MQTEVQKLTNAKAIITYLAEKFPLCFVLEGEAKPLKIGLFQDLAEALQDDERVSKTQLRQALRQYTSNWRYLYGCREGAVRVDLQGNPAGVLDAEHVAHAAQQLAEAKARFAEKRAAAKKAQQKKHPRKPANKNLKKESKLSLSAVDFSQISVGSVVKVKAGDNAKKATVVEVLKDSARVELENGLIMNVAADRLFA.

Residues 115–138 (RAAAKKAQQKKHPRKPANKNLKKE) are disordered. The segment covering 117 to 131 (AAKKAQQKKHPRKPA) has biased composition (basic residues).

The protein belongs to the ProQ family.

The protein resides in the cytoplasm. Its function is as follows. RNA chaperone with significant RNA binding, RNA strand exchange and RNA duplexing activities. The sequence is that of RNA chaperone ProQ from Haemophilus influenzae (strain ATCC 51907 / DSM 11121 / KW20 / Rd).